A 224-amino-acid polypeptide reads, in one-letter code: UPF0758 protein Patl_0046 (224 aa).

One can recognise an MPN domain in the interval 102 to 224; the sequence is VFNSAQQTKH…AVSFAERGLI (123 aa). Zn(2+) contacts are provided by H173, H175, and D186. The JAMM motif signature appears at 173–186; it reads HNHPSGVAEPSQAD.

It belongs to the UPF0758 family.

In Pseudoalteromonas atlantica (strain T6c / ATCC BAA-1087), this protein is UPF0758 protein Patl_0046.